The chain runs to 285 residues: Energy-coupling factor transporter ATP-binding protein EcfA2 (285 aa).

The ABC transporter domain maps to 3 to 245 (INFEQVNFSY…DLVWFKTVAL (243 aa)). 40–47 (GQTGSGKS) contacts ATP. Glu171 functions as the Proton acceptor in the catalytic mechanism.

The protein belongs to the ABC transporter superfamily. Energy-coupling factor EcfA family. As to quaternary structure, forms a stable energy-coupling factor (ECF) transporter complex probably composed of 2 membrane-embedded substrate-binding proteins (S component), 2 ATP-binding proteins (A component) and 2 transmembrane proteins (T component). This complex interacts with a number of substrate-specific components, including FolT, PanT and RibU for 5-formyltetrahydrofolate, pantothenate and riboflavin respectively.

Its subcellular location is the cell membrane. In terms of biological role, ATP-binding (A) component of a common energy-coupling factor (ECF) ABC-transporter complex. Unlike classic ABC transporters this ECF transporter provides the energy necessary to transport a number of different substrates including 5-formyltetrahydrofolate, pantothenate and riboflavin. Expression of the complex plus FolT in E.coli allows 5-formyltetrahydrofolate uptake; 5-formyltetrahydrofolate is not taken up in the absence of FolT or the EcfA1A2T complex. The chain is Energy-coupling factor transporter ATP-binding protein EcfA2 from Leuconostoc mesenteroides subsp. mesenteroides (strain ATCC 8293 / DSM 20343 / BCRC 11652 / CCM 1803 / JCM 6124 / NCDO 523 / NBRC 100496 / NCIMB 8023 / NCTC 12954 / NRRL B-1118 / 37Y).